The following is a 141-amino-acid chain: Galactose-6-phosphate isomerase subunit LacA (141 aa).

It belongs to the LacAB/RpiB family. Heteromultimeric protein consisting of LacA and LacB.

The enzyme catalyses aldehydo-D-galactose 6-phosphate = keto-D-tagatose 6-phosphate. The protein operates within carbohydrate metabolism; D-galactose 6-phosphate degradation; D-tagatose 6-phosphate from D-galactose 6-phosphate: step 1/1. The chain is Galactose-6-phosphate isomerase subunit LacA from Streptococcus equi subsp. zooepidemicus (strain MGCS10565).